The following is a 217-amino-acid chain: NADPH-dependent 3-demethoxyubiquinone 3-hydroxylase, mitochondrial (217 aa).

A mitochondrion-targeting transit peptide spans 1 to 35 (MSCAGAAAAPRLWRLRPGARRSLSAYGRRTSVRFR). Residues 11-29 (RLWRLRPGARRSLSAYGRR) form a required for nuclear localization region. Repeat copies occupy residues 48–129 (AVDR…TALL) and 130–217 (GKEG…SERL). A 2 X approximate tandem repeats region spans residues 48–217 (AVDRIIRVDH…RVAIYLSERL (170 aa)). Arg-51 serves as a coordination point for NADH. Fe cation-binding residues include Glu-60, Glu-90, His-93, Glu-142, Glu-178, and His-181. Tyr-212 and Arg-216 together coordinate NADH.

The protein belongs to the COQ7 family. In terms of assembly, component of a multi-subunit COQ enzyme complex. Interacts with COQ8B and COQ6. Interacts with COQ9. It depends on Fe cation as a cofactor. As to expression, expressed dominantly in heart and skeletal muscle.

It is found in the mitochondrion inner membrane. Its subcellular location is the mitochondrion. The protein localises to the nucleus. The protein resides in the chromosome. The catalysed reaction is a 5-methoxy-2-methyl-3-(all-trans-polyprenyl)benzoquinone + NADH + O2 = a 3-demethylubiquinone + NAD(+) + H2O. It participates in cofactor biosynthesis; ubiquinone biosynthesis. Functionally, catalyzes the hydroxylation of the 5-methoxy-2-methyl-3-(all-trans-polyprenyl)benzoquinone at the C6 position and participates in the biosynthesis of ubiquinone. Catalyzes the reaction through a substrate-mediated reduction pathway, whereby NADH shuttles electrons to 5-methoxy-2-methyl-3-(all-trans-decaprenyl)benzoquinone, which then transfers the electrons to the two Fe(3+) centers. The binding of 5-methoxy-2-methyl-3-(all-trans-polyprenyl)benzoquinone (DMQn) mediates reduction of the diiron center by nicotinamide adenine dinucleotide (NADH) and initiates oxygen activation for subsequent DMQ hydroxylation. The physiological substrates are 5-methoxy-2-methyl-3-(all-trans-nonaprenyl)benzoquinone (DMQ(9)) and 5-methoxy-2-methyl-3-(all-trans-decaprenyl)benzoquinone (DMQ(10)), however in vitro the enzyme does not have any specificity concerning the length of the polyprenyl tail, and accepts tails of various lengths with similar efficiency. Also has a structural role in the COQ enzyme complex, stabilizing other COQ polypeptides. Involved in lifespan determination in a ubiquinone-independent manner. Plays a role in modulating mitochondrial stress responses, acting in the nucleus, perhaps via regulating gene expression, independent of its characterized mitochondrial function in ubiquinone biosynthesis. In Homo sapiens (Human), this protein is NADPH-dependent 3-demethoxyubiquinone 3-hydroxylase, mitochondrial.